Reading from the N-terminus, the 239-residue chain is Large ribosomal subunit protein uL2 (239 aa).

Residues 202-239 (HGGGSHQHVGRPSTVARNTPPGRKVGHIAARRTGRRKG) are disordered. The segment covering 225-239 (KVGHIAARRTGRRKG) has biased composition (basic residues).

It belongs to the universal ribosomal protein uL2 family. In terms of assembly, part of the 50S ribosomal subunit. Forms a bridge to the 30S subunit in the 70S ribosome.

One of the primary rRNA binding proteins. Required for association of the 30S and 50S subunits to form the 70S ribosome, for tRNA binding and peptide bond formation. It has been suggested to have peptidyltransferase activity; this is somewhat controversial. Makes several contacts with the 16S rRNA in the 70S ribosome. The sequence is that of Large ribosomal subunit protein uL2 from Desulfurococcus amylolyticus (strain DSM 18924 / JCM 16383 / VKM B-2413 / 1221n) (Desulfurococcus kamchatkensis).